The following is a 108-amino-acid chain: UPF0060 membrane protein SA2130 (108 aa).

4 helical membrane passes run isoleucine 5–tryptophan 25, serine 31–phenylalanine 51, valine 60–aspartate 80, and lysine 86–serine 106.

It belongs to the UPF0060 family.

Its subcellular location is the cell membrane. This Staphylococcus aureus (strain N315) protein is UPF0060 membrane protein SA2130.